Here is a 94-residue protein sequence, read N- to C-terminus: Co-chaperonin GroES (94 aa).

The protein belongs to the GroES chaperonin family. Heptamer of 7 subunits arranged in a ring. Interacts with the chaperonin GroEL.

The protein resides in the cytoplasm. Functionally, together with the chaperonin GroEL, plays an essential role in assisting protein folding. The GroEL-GroES system forms a nano-cage that allows encapsulation of the non-native substrate proteins and provides a physical environment optimized to promote and accelerate protein folding. GroES binds to the apical surface of the GroEL ring, thereby capping the opening of the GroEL channel. The chain is Co-chaperonin GroES from Clostridium beijerinckii (strain ATCC 51743 / NCIMB 8052) (Clostridium acetobutylicum).